We begin with the raw amino-acid sequence, 181 residues long: Endoglucanase (181 aa).

An intrachain disulfide couples C4 to C16. D24 serves as the catalytic Nucleophile. Cystine bridges form between C30–C69, C32–C176, C65–C178, C72–C157, and C103–C113. D132 functions as the Proton donor in the catalytic mechanism.

Digestive gland.

It catalyses the reaction Endohydrolysis of (1-&gt;4)-beta-D-glucosidic linkages in cellulose, lichenin and cereal beta-D-glucans.. In terms of biological role, active towards the soluble carboxymethylcellulose (CMC). Possesses expansin activity too. The polypeptide is Endoglucanase (Mytilus edulis (Blue mussel)).